Consider the following 711-residue polypeptide: Ferric reductase transmembrane component 3 (711 aa).

An N-terminal signal peptide occupies residues 1–20 (MYWVLLCGSILLCCLSGASA). The Extracellular portion of the chain corresponds to 21 to 166 (SPAKTKMYGK…YANYDIGHTY (146 aa)). 4 N-linked (GlcNAc...) asparagine glycosylation sites follow: N85, N108, N120, and N134. The helical transmembrane segment at 167 to 187 (GGIICAYFVGVMILASILHYL) threads the bilayer. At 188–237 (SYTPFKTALFKQRLVRYVRRYLTIPTIWGKHASSFSYLKIFTGFLPTRSE) the chain is on the cytoplasmic side. A helical membrane pass occupies residues 238-258 (GVIILGYLVLHTVFLAYGYQY). Topologically, residues 259–280 (DPYNLIFDSRREQIARYVADRS) are extracellular. Positions 280–414 (SGVLAFAHFP…SGIEWIYAAI (135 aa)) constitute a Ferric oxidoreductase domain. Residues 281-301 (GVLAFAHFPLIALFAGRNNFL) form a helical membrane-spanning segment. Residues 302–321 (EFISGVKYTSFIMFHKWLGR) lie on the Cytoplasmic side of the membrane. The heme site is built by H316 and H330. A helical transmembrane segment spans residues 322-341 (MMFLDAVIHGAAYTSYSVFY). Topologically, residues 342–353 (KDWAASKEETYW) are extracellular. Residues 354–374 (QFGVAALCIVGVMVFFSLAMF) traverse the membrane as a helical segment. The Cytoplasmic portion of the chain corresponds to 375–376 (RK). The chain crosses the membrane as a helical span at residues 377 to 397 (FFYEAFLFLHIVLGALFFYTC). Position 386 (H386) interacts with heme. Position 398 (W398) is a topological domain, extracellular. Residues 399-419 (EHVVELSGIEWIYAAIAIWTI) form a helical membrane-spanning segment. H400 lines the heme pocket. An FAD-binding FR-type domain is found at 415 to 534 (AIWTIDRLIR…EGPYGSSSPV (120 aa)). Topologically, residues 420–711 (DRLIRIVRVS…IEYFEEYQSW (292 aa)) are cytoplasmic. 479-485 (HPFTVLD) lines the FAD pocket. NADP(+)-binding positions include 526-529 (GPYG) and 677-678 (CG).

It belongs to the ferric reductase (FRE) family. Requires FAD as cofactor. The cofactor is heme.

It is found in the cell membrane. It catalyses the reaction 2 a Fe(II)-siderophore + NADP(+) + H(+) = 2 a Fe(III)-siderophore + NADPH. In terms of biological role, siderophore-iron reductase responsible for reducing extracellular iron prior to import. Catalyzes the reductive uptake of Fe(3+) bound to di- and trihydroxamate siderophores. Fe(3+) is reduced to Fe(2+), which then dissociates from the siderophore and can be imported by the high-affinity Fe(2+) transport complex in the plasma membrane. The protein is Ferric reductase transmembrane component 3 (FRE3) of Saccharomyces cerevisiae (strain ATCC 204508 / S288c) (Baker's yeast).